A 403-amino-acid polypeptide reads, in one-letter code: Argininosuccinate synthase (403 aa).

ATP-binding positions include Ala-13–Ser-21 and Ala-40. Residues Tyr-91 and Ser-96 each contribute to the L-citrulline site. Gly-121 serves as a coordination point for ATP. The L-aspartate site is built by Thr-123, Asn-127, and Asp-128. Residue Asn-127 participates in L-citrulline binding. Arg-131, Ser-180, Ser-189, Glu-265, and Tyr-277 together coordinate L-citrulline.

It belongs to the argininosuccinate synthase family. Type 1 subfamily. Homotetramer.

The protein resides in the cytoplasm. The catalysed reaction is L-citrulline + L-aspartate + ATP = 2-(N(omega)-L-arginino)succinate + AMP + diphosphate + H(+). Its pathway is amino-acid biosynthesis; L-arginine biosynthesis; L-arginine from L-ornithine and carbamoyl phosphate: step 2/3. The polypeptide is Argininosuccinate synthase (Leptospira interrogans serogroup Icterohaemorrhagiae serovar copenhageni (strain Fiocruz L1-130)).